A 197-amino-acid polypeptide reads, in one-letter code: Thymidine kinase (197 aa).

ATP is bound by residues 15-22 (GPMFAGKT) and 93-96 (DEVQ). Glu-94 (proton acceptor) is an active-site residue. Positions 150, 153, 188, and 191 each coordinate Zn(2+).

It belongs to the thymidine kinase family. As to quaternary structure, homotetramer.

The protein resides in the cytoplasm. The enzyme catalyses thymidine + ATP = dTMP + ADP + H(+). The chain is Thymidine kinase from Thermococcus kodakarensis (strain ATCC BAA-918 / JCM 12380 / KOD1) (Pyrococcus kodakaraensis (strain KOD1)).